We begin with the raw amino-acid sequence, 388 residues long: Fructose-bisphosphate aldolase, chloroplastic (388 aa).

The N-terminal 38 residues, 1 to 38, are a transit peptide targeting the chloroplast; that stretch reads MASATLLKSSFLPKKSEWGATRQAAAPKPVTVSMVVRA. A substrate-binding site is contributed by Arg-72. Glu-215 acts as the Proton acceptor in catalysis. Lys-257 acts as the Schiff-base intermediate with dihydroxyacetone-P in catalysis. Substrate contacts are provided by residues 299–301 and Arg-329; that span reads SGG.

Belongs to the class I fructose-bisphosphate aldolase family. In terms of assembly, homotetramer. As to expression, expressed in leaf mesophyll cells.

The protein resides in the plastid. It localises to the chloroplast. It is found in the plastoglobule. The catalysed reaction is beta-D-fructose 1,6-bisphosphate = D-glyceraldehyde 3-phosphate + dihydroxyacetone phosphate. The protein operates within carbohydrate degradation; glycolysis; D-glyceraldehyde 3-phosphate and glycerone phosphate from D-glucose: step 4/4. Its function is as follows. Plays a key role in glycolysis and gluconeogenesis. The chain is Fructose-bisphosphate aldolase, chloroplastic from Oryza sativa subsp. japonica (Rice).